Here is a 390-residue protein sequence, read N- to C-terminus: Centrosomal protein of 44 kDa (390 aa).

Residues 11–195 (RNLEQVLRLL…ISEDTLSPIT (185 aa)) form a binds with microtubules and centrioles region. Residues 233–267 (EITALQTMLAECQEKLKELTLIEKRLDCLEQKMKG) are a coiled coil. Residues 323–347 (KNKVGRPASIPLSSRYSTASSDSTP) form a disordered region. 2 positions are modified to phosphoserine: serine 331 and serine 345. The segment covering 335–345 (SSRYSTASSDS) has biased composition (low complexity). Residue threonine 346 is modified to Phosphothreonine. Residues 361–385 (SEETTIQKMERMKKMFEETAELLKC) adopt a coiled-coil conformation.

As to quaternary structure, interacts with CROCC. Interacts with POC1B; the interaction is direct and recruits POC1B to centriolar microtubules. Binds to centriolar microtubules.

It localises to the cytoplasm. Its subcellular location is the cytoskeleton. The protein resides in the microtubule organizing center. The protein localises to the centrosome. It is found in the centriole. It localises to the spindle pole. Its subcellular location is the midbody. Centriole-enriched microtubule-binding protein involved in centriole biogenesis. In collaboration with CEP295 and POC1B, is required for the centriole-to-centrosome conversion by ensuring the formation of bona fide centriole wall. Functions as a linker component that maintains centrosome cohesion. Associates with CROCC and regulates its stability and localization to the centrosome. This chain is Centrosomal protein of 44 kDa (CEP44), found in Macaca fascicularis (Crab-eating macaque).